The chain runs to 335 residues: Urokinase plasminogen activator surface receptor (335 aa).

Positions 1–22 (MGHPPLLPLLLLLHTCVPASWG) are cleaved as a signal peptide. 3 UPAR/Ly6 domains span residues 23–114 (LRCM…RSRY), 115–213 (LECI…PQNG), and 214–305 (RQCY…YRSG). Intrachain disulfides connect Cys25–Cys46, Cys28–Cys34, and Cys39–Cys67. The N-linked (GlcNAc...) asparagine glycan is linked to Asn74. 11 disulfides stabilise this stretch: Cys93–Cys98, Cys117–Cys144, Cys120–Cys127, Cys137–Cys169, Cys175–Cys192, Cys193–Cys198, Cys216–Cys244, Cys219–Cys227, Cys237–Cys263, Cys269–Cys287, and Cys288–Cys293. Residues Asn184, Asn194, Asn222, and Asn255 are each glycosylated (N-linked (GlcNAc...) asparagine). Gly305 is lipidated: GPI-anchor amidated glycine. A propeptide spans 306 to 335 (AAPQPGPAHLSLTITLLMTARLWGGTLLWT) (removed in mature form).

Monomer. Interacts with MRC2. Interacts (via the UPAR/Ly6 domains) with SRPX2. Interacts with FAP (seprase); the interaction occurs at the cell surface of invadopodia membrane. Interacts with SORL1 (via N-terminal ectodomain); this interaction decreases PLAUR internalization. The ternary complex composed of PLAUR-PLAU-SERPINE1 also interacts with SORL1. Interacts with CD82; this interaction prevents PLAUR from binding to its high affinity ligand PLAU. In terms of tissue distribution, expressed in neurons of the rolandic area of the brain (at protein level). Expressed in the brain.

Its subcellular location is the cell membrane. The protein resides in the cell projection. It is found in the invadopodium membrane. The protein localises to the secreted. Its function is as follows. Acts as a receptor for urokinase plasminogen activator. Plays a role in localizing and promoting plasmin formation. Mediates the proteolysis-independent signal transduction activation effects of U-PA. It is subject to negative-feedback regulation by U-PA which cleaves it into an inactive form. The polypeptide is Urokinase plasminogen activator surface receptor (PLAUR) (Homo sapiens (Human)).